The sequence spans 78 residues: Translational regulator CsrA (78 aa).

It belongs to the CsrA/RsmA family. In terms of assembly, homodimer; the beta-strands of each monomer intercalate to form a hydrophobic core, while the alpha-helices form wings that extend away from the core.

The protein localises to the cytoplasm. In terms of biological role, a translational regulator that binds mRNA to regulate translation initiation and/or mRNA stability. Usually binds in the 5'-UTR at or near the Shine-Dalgarno sequence preventing ribosome-binding, thus repressing translation. Its main target seems to be the major flagellin gene, while its function is anatagonized by FliW. In Desulfovibrio desulfuricans (strain ATCC 27774 / DSM 6949 / MB), this protein is Translational regulator CsrA.